Reading from the N-terminus, the 462-residue chain is Glycine--tRNA ligase (462 aa).

Substrate contacts are provided by arginine 100 and glutamate 174. ATP-binding positions include 206 to 208 (RNE), 216 to 221 (FRTREF), 290 to 291 (EL), and 334 to 337 (GADR). 221–225 (FEQME) contributes to the substrate binding site. 330–334 (EPSLG) provides a ligand contact to substrate.

The protein belongs to the class-II aminoacyl-tRNA synthetase family. Homodimer.

It is found in the cytoplasm. It carries out the reaction tRNA(Gly) + glycine + ATP = glycyl-tRNA(Gly) + AMP + diphosphate. Its function is as follows. Catalyzes the attachment of glycine to tRNA(Gly). In Ruminiclostridium cellulolyticum (strain ATCC 35319 / DSM 5812 / JCM 6584 / H10) (Clostridium cellulolyticum), this protein is Glycine--tRNA ligase.